Consider the following 277-residue polypeptide: 5-formyltetrahydrofolate cyclo-ligase, mitochondrial (277 aa).

Residues 1-48 (MIGARVFCITTTALRRSPIFFFPKIPTRPVFRLSPATRPIVAMSTTSK) constitute a mitochondrion transit peptide. Position 60-64 (60-64 (KRVVR)) interacts with ATP. Substrate-binding positions include Glu113 and 207–211 (RGGGY). Residues 206–213 (GRGGGYYD) and Asp254 contribute to the ATP site.

Belongs to the 5-formyltetrahydrofolate cyclo-ligase family. As to quaternary structure, monomer.

It is found in the mitochondrion. The enzyme catalyses (6S)-5-formyl-5,6,7,8-tetrahydrofolate + ATP = (6R)-5,10-methenyltetrahydrofolate + ADP + phosphate. Functionally, contributes to tetrahydrofolate metabolism and photorespiration through the regulation of serine hydroxymethyltransferase. Prefers the pentalutamyl to the monoglutamyl form of 5-formyltetrahydrofolate. The protein is 5-formyltetrahydrofolate cyclo-ligase, mitochondrial (5FCL) of Arabidopsis thaliana (Mouse-ear cress).